We begin with the raw amino-acid sequence, 115 residues long: Large ribosomal subunit protein P2y (115 aa).

The tract at residues 63–115 (ASVPSGGGGGVAVASATSGGGGGGGASAAESKKEEKKEEKEESDDDMGFSLFE) is disordered. Residues 92 to 102 (ESKKEEKKEEK) show a composition bias toward basic and acidic residues. Ser-105 carries the post-translational modification Phosphoserine.

This sequence belongs to the eukaryotic ribosomal protein P1/P2 family. P1 and P2 exist as dimers at the large ribosomal subunit. In terms of processing, phosphorylated.

In terms of biological role, plays an important role in the elongation step of protein synthesis. The polypeptide is Large ribosomal subunit protein P2y (RPP2B) (Arabidopsis thaliana (Mouse-ear cress)).